The chain runs to 296 residues: Ribonuclease HIII (296 aa).

Residues 81-296 (QAMIGTDEVG…TQKAKQLLER (216 aa)) enclose the RNase H type-2 domain. The a divalent metal cation site is built by Asp87, Glu88, and Asp190.

This sequence belongs to the RNase HII family. RnhC subfamily. Requires Mn(2+) as cofactor. The cofactor is Mg(2+).

It is found in the cytoplasm. The enzyme catalyses Endonucleolytic cleavage to 5'-phosphomonoester.. Its function is as follows. Endonuclease that specifically degrades the RNA of RNA-DNA hybrids. The protein is Ribonuclease HIII of Streptococcus gordonii (strain Challis / ATCC 35105 / BCRC 15272 / CH1 / DL1 / V288).